A 327-amino-acid chain; its full sequence is DNA-directed RNA polymerase subunit alpha (327 aa).

An alpha N-terminal domain (alpha-NTD) region spans residues 1–233 (MVREKVKVST…NLFIPFLHVE (233 aa)). Residues 267–327 (LAFQYIFIDQ…KKILDILEKK (61 aa)) are alpha C-terminal domain (alpha-CTD).

Belongs to the RNA polymerase alpha chain family. As to quaternary structure, in plastids the minimal PEP RNA polymerase catalytic core is composed of four subunits: alpha, beta, beta', and beta''. When a (nuclear-encoded) sigma factor is associated with the core the holoenzyme is formed, which can initiate transcription.

It is found in the plastid. Its subcellular location is the chloroplast. It catalyses the reaction RNA(n) + a ribonucleoside 5'-triphosphate = RNA(n+1) + diphosphate. Functionally, DNA-dependent RNA polymerase catalyzes the transcription of DNA into RNA using the four ribonucleoside triphosphates as substrates. This chain is DNA-directed RNA polymerase subunit alpha, found in Crucihimalaya wallichii (Rock-cress).